The chain runs to 425 residues: Serine--tRNA ligase (425 aa).

230–232 (TAE) contributes to the L-serine binding site. 261–263 (RSE) serves as a coordination point for ATP. Glu-284 contacts L-serine. An ATP-binding site is contributed by 348 to 351 (EISS). Ser-384 provides a ligand contact to L-serine.

Belongs to the class-II aminoacyl-tRNA synthetase family. Type-1 seryl-tRNA synthetase subfamily. In terms of assembly, homodimer. The tRNA molecule binds across the dimer.

Its subcellular location is the cytoplasm. It carries out the reaction tRNA(Ser) + L-serine + ATP = L-seryl-tRNA(Ser) + AMP + diphosphate + H(+). The enzyme catalyses tRNA(Sec) + L-serine + ATP = L-seryl-tRNA(Sec) + AMP + diphosphate + H(+). It functions in the pathway aminoacyl-tRNA biosynthesis; selenocysteinyl-tRNA(Sec) biosynthesis; L-seryl-tRNA(Sec) from L-serine and tRNA(Sec): step 1/1. Its function is as follows. Catalyzes the attachment of serine to tRNA(Ser). Is also able to aminoacylate tRNA(Sec) with serine, to form the misacylated tRNA L-seryl-tRNA(Sec), which will be further converted into selenocysteinyl-tRNA(Sec). This Streptococcus equi subsp. zooepidemicus (strain H70) protein is Serine--tRNA ligase.